The sequence spans 535 residues: uncharacterized protein (535 aa).

Transmembrane regions (helical) follow at residues 63–83, 90–110, 143–163, 168–188, 226–246, and 258–278; these read LTGI…PSIY, VTFG…TYWI, VAAV…TLYG, VFVT…ATNC, SLGS…VLLV, and VLIL…ILAW. An HAMP domain is found at 279–330; it reads LTAAPVRVVRAALKRVEQGDLRGDLVVFDGTELGELQRGFNAMVNGLRERER. The Guanylate cyclase domain maps to 362 to 486; sequence AVVFVDIVGS…KPVNQAARLC (125 aa).

Belongs to the adenylyl cyclase class-3 family.

The protein localises to the cell membrane. This is an uncharacterized protein from Mycobacterium tuberculosis (strain ATCC 25618 / H37Rv).